Reading from the N-terminus, the 2178-residue chain is Streptococcal hemagglutinin (2178 aa).

The N-terminal stretch at 1-90 (MFFKRQKGQY…AVVTSSSVYA (90 aa)) is a signal peptide. The interval 91-137 (EEEQALEKVIDTRDVLATRGEAVLSEEAATTLSSEGANPVESLSDTL) is non-repeat region 1 (NR1). The interval 138-219 (SASESASANS…SLISSDSSNS (82 aa)) is ser-rich region 1 (SR1). Positions 192–244 (TSQSFSSTTSSTQSSNNESLISSDSSNSLNTNQSVSARNQNARVRTRRAVAAN) are enriched in low complexity. Disordered regions lie at residues 192 to 246 (TSQS…ANDT), 495 to 557 (VSAS…SVSA), 584 to 653 (SAST…SVSA), 836 to 857 (SASTSASVSASESASTSASVSA), 884 to 917 (SASTSASVSASESASTSASVSASESASTSASVSA), 944 to 993 (SAST…SESA), 1020 to 1289 (SASV…SVSA), 1341 to 1390 (ASTS…ESAS), 1488 to 1685 (SASV…SVSA), 1725 to 1901 (ASTS…SAST), and 2119 to 2151 (LSQSLSDSQSTSATQSMHDRISKGQLPRTGESE). The interval 220–449 (LNTNQSVSAR…ANRVVKDLQI (230 aa)) is non-repeat region 2 (NR2). The tract at residues 450–2143 (SKSNSASQSS…SMHDRISKGQ (1694 aa)) is ser-rich region 2 (SR2). Residues 2119–2130 (LSQSLSDSQSTS) show a composition bias toward low complexity. Residues 2144–2148 (LPRTG) carry the LPXTG sorting signal motif. Pentaglycyl murein peptidoglycan amidated threonine is present on Thr-2147. The propeptide at 2148–2178 (GESESKASILALGIGALGLAFKKRKKNESED) is removed by sortase.

The protein belongs to the serine-rich repeat protein (SRRP) family. In terms of processing, the protein is glycosylated in vivo; constructs without SR1 and SR2 are not glycosylated.

The protein localises to the secreted. It is found in the cell wall. Its function is as follows. A cell wall protein involved with PadA in host cell interactions required for colonization and pathogensis. Mediates hemagglutination and adherence to ghst glycoproteins. Recognizes fetuin-A (AHSG), a highly glycosylated human plasma protein, also involved in recognition of human platelets, probably via platelet glycoprotein Ib alpha (GP1BA). Acts in concert with PadA to promote binding to glycosylated human fibronectin (FN1) and vitronectin (VTN), and biofilm formation. Plays a major role in fibronectin and vitronectin binding; binding is mediated by glycosylated regions. Probably mediates interaction of PadA with resting platelets. This chain is Streptococcal hemagglutinin, found in Streptococcus gordonii (strain Challis / ATCC 35105 / BCRC 15272 / CH1 / DL1 / V288).